Reading from the N-terminus, the 592-residue chain is Frizzled-5 (592 aa).

Residues 1–38 form the signal peptide; sequence MRKPADEHHFTMETSGMHLVGFWLHVLLLFQLSGLGDS. Residues 39-248 lie on the Extracellular side of the membrane; sequence ASKDIVCEPI…QDERTFTTFW (210 aa). Residues 40–161 form the FZ domain; that stretch reads SKDIVCEPIT…GDTDRLCMDR (122 aa). Disulfide bonds link Cys-45/Cys-106, Cys-53/Cys-99, Cys-90/Cys-128, Cys-117/Cys-158, and Cys-121/Cys-145. The interval 162 to 192 is disordered; the sequence is NSSETTTLSPPFPKPTPKGTPRHRATAKSAP. Residues 249-269 form a helical membrane-spanning segment; it reads IGLWSVLCFVSTFTTVATFLI. Over 270-280 the chain is Cytoplasmic; that stretch reads DMERFKYPERP. A helical membrane pass occupies residues 281–301; sequence IIFLAACYLFVSLGYIVRLLA. Topologically, residues 302–327 are extracellular; it reads GHERVACEGTGDQQHILYDTTGPALC. A helical membrane pass occupies residues 328–348; it reads TLVFLLIYFFGMASSIWWVVL. Over 349–370 the chain is Cytoplasmic; sequence SFTWFLAAGMKWGNEAIAGYSQ. The helical transmembrane segment at 371 to 391 threads the bilayer; that stretch reads YFHLAAWLVPSVKSIAVLALS. The Extracellular portion of the chain corresponds to 392–414; that stretch reads SVDGDPVAGICYVGNQSLEGLRG. Residues 415-435 form a helical membrane-spanning segment; it reads FVLAPLVVYLFTGSLFLLAGF. Topologically, residues 436–461 are cytoplasmic; sequence VSLFRIRSVIKQGGTKTDKLEKLMIR. The chain crosses the membrane as a helical span at residues 462–482; it reads IGLFTVLYTVPATIVVACLVY. Residues 483–512 are Extracellular-facing; sequence EQHYRPSWERALACSCPSERQRLGMGPDYA. The chain crosses the membrane as a helical span at residues 513-533; the sequence is VFMLKYFMCLVVGITSGVWIW. Residues 534–592 are Cytoplasmic-facing; that stretch reads SGKTLESWRRFIARYVPCRTRKPPVSASSMYSEASTALTARAGTAPTGTYHKSAPSSHV.

The protein belongs to the G-protein coupled receptor Fz/Smo family.

Its subcellular location is the cell membrane. It is found in the golgi apparatus membrane. The protein localises to the synapse. It localises to the perikaryon. The protein resides in the cell projection. Its subcellular location is the dendrite. It is found in the axon. Receptor for Wnt proteins. Following binding, activates the canonical Wnt/beta-catenin signaling pathway. Also activates wnt non-canonical signaling. In neurons, activation of the Wnt pathway promotes formation of synapses. May be involved in transduction and intercellular transmission of polarity information during tissue morphogenesis and/or in differentiated tissues. Plays a role in early eye development, possibly through wnt non-canonical signaling. As a receptor for wnt11, promotes eye formation, at least partially, by antagonizing the Wnt/beta-catenin pathway. In addition, promotes coherence of eye field cells, potentially contributing to the coordinated morphogenetic behaviors of cells in the nascent eye field. This chain is Frizzled-5 (fzd5), found in Danio rerio (Zebrafish).